The sequence spans 390 residues: Lipid-A-disaccharide synthase (390 aa).

This sequence belongs to the LpxB family.

It catalyses the reaction a lipid X + a UDP-2-N,3-O-bis[(3R)-3-hydroxyacyl]-alpha-D-glucosamine = a lipid A disaccharide + UDP + H(+). Its pathway is bacterial outer membrane biogenesis; LPS lipid A biosynthesis. In terms of biological role, condensation of UDP-2,3-diacylglucosamine and 2,3-diacylglucosamine-1-phosphate to form lipid A disaccharide, a precursor of lipid A, a phosphorylated glycolipid that anchors the lipopolysaccharide to the outer membrane of the cell. The chain is Lipid-A-disaccharide synthase from Haemophilus influenzae (strain 86-028NP).